The following is a 302-amino-acid chain: 1D-myo-inositol 2-acetamido-2-deoxy-alpha-D-glucopyranoside deacetylase (302 aa).

Zn(2+)-binding residues include H12, D15, and H147.

The protein belongs to the MshB deacetylase family. It depends on Zn(2+) as a cofactor.

It catalyses the reaction 1D-myo-inositol 2-acetamido-2-deoxy-alpha-D-glucopyranoside + H2O = 1D-myo-inositol 2-amino-2-deoxy-alpha-D-glucopyranoside + acetate. In terms of biological role, catalyzes the deacetylation of 1D-myo-inositol 2-acetamido-2-deoxy-alpha-D-glucopyranoside (GlcNAc-Ins) in the mycothiol biosynthesis pathway. This Thermobispora bispora (strain ATCC 19993 / DSM 43833 / CBS 139.67 / JCM 10125 / KCTC 9307 / NBRC 14880 / R51) protein is 1D-myo-inositol 2-acetamido-2-deoxy-alpha-D-glucopyranoside deacetylase.